The sequence spans 660 residues: MKAVIFAYHDMGCQGVQAVLDAGYEIAAIFTHADNPAENTFFGSVSRLAAGLGIPVYAPDNVNHPIWIDRIAELAPDIIFSFYYRNLLSEEILHLAPAGAFNLHGSLLPAYRGRAPLNWVLVNGESETGVTLHRMVKRADAGEIVASQRVAIAQDDVALTLHHKLCQAARQLLNSILPTMKCGDIPSVPQRESDATYYGRRRPEDGLIDWHKPVSTVHNLVRAVAAPWPGAFSYNGSQKFTIWSSRICPDAQGALPGSVISVSPLRVACADGALEIITGQAGDGITVQGSQLAQTLGLVAGARLNRPPATSGKRRIRVLILGVNGFIGNHLTERLLNEENYEVYGMDIGSNAISRFLLHPRFHFVEGDISIHSEWIEYHVKKCDVVLPLVAIATPIEYTRNPLRVFELDFEENLRIIRYCVKYRKRVVFPSTSEVYGMCTDASFDEDKSNLIVGPVNKPRWIYSVSKQLLDRVIWAYGEKEGLRFTLFRPFNWMGPRLDSLNAARIGSSRAITQLILNLVEGTPIKLIDGGQQKRCFTDIRDGIEALFRIIVNDGDRCDGKIINIGNPDNEASIQELATLLLDSFDKHPLRCHFPPFAGFQVVESRSYYGKGYQDVAHRKPSIDNARRCLGWEPSIAMRDTVEETLDFFLRSVDVAERAS.

Positions 1 to 304 are formyltransferase ArnAFT; the sequence is MKAVIFAYHD…TLGLVAGARL (304 aa). The active-site Proton donor; for formyltransferase activity is histidine 104. (6R)-10-formyltetrahydrofolate-binding positions include arginine 114 and 136–140; that span reads VKRAD. The interval 314 to 660 is dehydrogenase ArnADH; the sequence is RRIRVLILGV…RSVDVAERAS (347 aa). NAD(+) is bound by residues aspartate 347 and 368–369; that span reads DI. UDP-alpha-D-glucuronate is bound by residues alanine 393, tyrosine 398, and 432–433; that span reads TS. Glutamate 434 (proton acceptor; for decarboxylase activity) is an active-site residue. Residues arginine 460, asparagine 492, 526 to 535, and tyrosine 613 contribute to the UDP-alpha-D-glucuronate site; that span reads KLIDGGQQKR. Arginine 619 functions as the Proton donor; for decarboxylase activity in the catalytic mechanism.

The protein in the N-terminal section; belongs to the Fmt family. UDP-L-Ara4N formyltransferase subfamily. This sequence in the C-terminal section; belongs to the NAD(P)-dependent epimerase/dehydratase family. UDP-glucuronic acid decarboxylase subfamily. Homohexamer, formed by a dimer of trimers.

It catalyses the reaction UDP-alpha-D-glucuronate + NAD(+) = UDP-beta-L-threo-pentopyranos-4-ulose + CO2 + NADH. The enzyme catalyses UDP-4-amino-4-deoxy-beta-L-arabinose + (6R)-10-formyltetrahydrofolate = UDP-4-deoxy-4-formamido-beta-L-arabinose + (6S)-5,6,7,8-tetrahydrofolate + H(+). It participates in nucleotide-sugar biosynthesis; UDP-4-deoxy-4-formamido-beta-L-arabinose biosynthesis; UDP-4-deoxy-4-formamido-beta-L-arabinose from UDP-alpha-D-glucuronate: step 1/3. It functions in the pathway nucleotide-sugar biosynthesis; UDP-4-deoxy-4-formamido-beta-L-arabinose biosynthesis; UDP-4-deoxy-4-formamido-beta-L-arabinose from UDP-alpha-D-glucuronate: step 3/3. The protein operates within bacterial outer membrane biogenesis; lipopolysaccharide biosynthesis. Bifunctional enzyme that catalyzes the oxidative decarboxylation of UDP-glucuronic acid (UDP-GlcUA) to UDP-4-keto-arabinose (UDP-Ara4O) and the addition of a formyl group to UDP-4-amino-4-deoxy-L-arabinose (UDP-L-Ara4N) to form UDP-L-4-formamido-arabinose (UDP-L-Ara4FN). The modified arabinose is attached to lipid A and is required for resistance to polymyxin and cationic antimicrobial peptides. This Salmonella heidelberg (strain SL476) protein is Bifunctional polymyxin resistance protein ArnA.